Consider the following 901-residue polypeptide: Probable inorganic carbon transporter subunit DabA (901 aa).

Zn(2+) is bound by residues Cys424, Asp426, His606, and Cys621.

The protein belongs to the inorganic carbon transporter (TC 9.A.2) DabA family. In terms of assembly, forms a complex with DabB. The cofactor is Zn(2+).

The protein localises to the cell membrane. Functionally, part of an energy-coupled inorganic carbon pump. The chain is Probable inorganic carbon transporter subunit DabA from Staphylococcus aureus (strain MRSA252).